A 157-amino-acid chain; its full sequence is MYFCGYMKNSINIKNRKAKFNYEFLDKYTAGIKLAGTEIKAIREGKANIAESFCEFNNHELFVINMHVEEYSHATHFNHNPRSQRKLLLQRRELRKLEKEVTNSGLTIIPLRLFINDRGLAKLQISLAKGKKLYDKRETIKDRESKRRLDRIQKEYK.

The protein belongs to the SmpB family.

It localises to the cytoplasm. Functionally, required for rescue of stalled ribosomes mediated by trans-translation. Binds to transfer-messenger RNA (tmRNA), required for stable association of tmRNA with ribosomes. tmRNA and SmpB together mimic tRNA shape, replacing the anticodon stem-loop with SmpB. tmRNA is encoded by the ssrA gene; the 2 termini fold to resemble tRNA(Ala) and it encodes a 'tag peptide', a short internal open reading frame. During trans-translation Ala-aminoacylated tmRNA acts like a tRNA, entering the A-site of stalled ribosomes, displacing the stalled mRNA. The ribosome then switches to translate the ORF on the tmRNA; the nascent peptide is terminated with the 'tag peptide' encoded by the tmRNA and targeted for degradation. The ribosome is freed to recommence translation, which seems to be the essential function of trans-translation. The sequence is that of SsrA-binding protein from Christiangramia forsetii (strain DSM 17595 / CGMCC 1.15422 / KT0803) (Gramella forsetii).